We begin with the raw amino-acid sequence, 313 residues long: Protein FixB (313 aa).

255–283 contacts FAD; the sequence is LYLAVGISGQIQHMVGANGAQTIFAINKD.

The protein belongs to the ETF alpha-subunit/FixB family. In terms of assembly, heterodimer of FixA and FixB.

It participates in amine and polyamine metabolism; carnitine metabolism. Its function is as follows. Required for anaerobic carnitine reduction. May bring reductant to CaiA. The protein is Protein FixB of Salmonella agona (strain SL483).